A 271-amino-acid chain; its full sequence is RELT-like protein 1 (271 aa).

The N-terminal stretch at 1–23 (MAPRALPGSAVLAAAVFVGGAVS) is a signal peptide. The Extracellular segment spans residues 24-57 (SPLVAPDNGSSRTLHSRTETTPSPSNDTGNGHPE). Positions 28–53 (APDNGSSRTLHSRTETTPSPSNDTGN) are disordered. 2 N-linked (GlcNAc...) asparagine glycosylation sites follow: N31 and N49. Residues 31–52 (NGSSRTLHSRTETTPSPSNDTG) show a composition bias toward polar residues. A helical transmembrane segment spans residues 58-78 (YIAYALVPVFFIMGLFGVLIC). At 79-271 (HLLKKKGYRC…PVKRERSGTE (193 aa)) the chain is on the cytoplasmic side. Residues 89–113 (TTEAEQDIEEEKVEKIELNDSVNEN) adopt a coiled-coil conformation. Residues S109 and S114 each carry the phosphoserine modification. Disordered stretches follow at residues 145–173 (DPESPVTPSTPGSPPVSPGPLSPGGTPGK) and 233–271 (VEHKSNQKERRSLMSVSGAETVNGEVPATPVKRERSGTE). Pro residues predominate over residues 155–165 (PGSPPVSPGPL). Positions 233 to 244 (VEHKSNQKERRS) are enriched in basic and acidic residues. S244 and S247 each carry phosphoserine.

It belongs to the RELT family. Interacts with RELT, RELL2 and OXSR1. Interacts with PLSCR1. Post-translationally, phosphorylated in vitro by OXSR1. In terms of tissue distribution, widely expressed. Expressed at highest levels in the placenta, skeletal muscle, spleen and testis.

It localises to the cell membrane. Induces activation of MAPK14/p38 cascade, when overexpressed. Induces apoptosis, when overexpressed. This Homo sapiens (Human) protein is RELT-like protein 1 (RELL1).